A 233-amino-acid chain; its full sequence is MSNGGSFTVEKLSLYGNPNIGVYLTASDSYVLAPDDIGADDVRTISEVLGVAMERVVRLRVLGMRLVGVLTTGNSRGILLPEGVDREVELVRKALEGVEVGIVPTRSNALGNVIVCNDRACLASPGLEKEALKTVSDTLGVEVVEGSVAGVYTVGSAIVVTNRGGLAHPDASEEELKFLSDVFKVPFEAGTINFGVEFVRTGLVANSYGALVGEDTTGPEIARIQVALGGGVK.

The protein belongs to the eIF-6 family.

Binds to the 50S ribosomal subunit and prevents its association with the 30S ribosomal subunit to form the 70S initiation complex. The polypeptide is Translation initiation factor 6 (Aeropyrum pernix (strain ATCC 700893 / DSM 11879 / JCM 9820 / NBRC 100138 / K1)).